Here is a 66-residue protein sequence, read N- to C-terminus: Large ribosomal subunit protein bL35 (66 aa).

It belongs to the bacterial ribosomal protein bL35 family.

This is Large ribosomal subunit protein bL35 from Jannaschia sp. (strain CCS1).